Consider the following 436-residue polypeptide: Histone acetyltransferase RTT109 (436 aa).

The Rtt109-type HAT domain occupies 2–404 (SLNDFLSSVL…LQSLTGKREH (403 aa)). Acetyl-CoA is bound by residues 88–90 (ADT) and 97–101 (RVSVR). The segment at 128 to 170 (RSYKKISPELISAASTPARTLRILARRLKQSGSTVLKEIESPR) is interaction with VPS75. Acetyl-CoA-binding positions include Phe-192, Ala-196, 211–213 (HIL), and Trp-221. Asp-288 acts as the Proton donor/acceptor in catalysis. Lys-290 bears the N6-acetyllysine; by autocatalysis mark. The interval 419–433 (LAITMLKPRKKAKAL) is interaction with ASF1.

The protein belongs to the RTT109 family. Forms a complex composed of two RTT109 subunits and one VPS75 homodimer; each RTT109 subunit interacts predominantly with VPS75 instead of interacting with the other RTT109 subunit. Interacts with VPS75; the interaction is direct. Interacts (via C-terminus) with ASF1; the interaction is direct. Interacts with histone H3/H4 heterodimers via histone H3.

Its subcellular location is the nucleus. The catalysed reaction is L-lysyl-[histone] + acetyl-CoA = N(6)-acetyl-L-lysyl-[histone] + CoA + H(+). It carries out the reaction L-lysyl-[protein] + acetyl-CoA = N(6)-acetyl-L-lysyl-[protein] + CoA + H(+). Histone chaperone-dependent acetylase that modifies 'Lys-9', 'Lys-14', 'Lys-23', 'Lys-27', and 'Lys-56' on histone H3 (H3K9Ac, H3K14Ac and H3K23Ac, H3K27Ac, and H3K56Ac) to promote nucleosome assembly, genomic stability, DNA repair and transcriptional regulation during mitotic S-phase. Its residue selectivity is influenced by the acetylation status of histone H3, and also the presence of histone chaperone ASF1 that shifts selectivity to 'Lys-56' when H3K14Ac is already present. H3K56 acetylation weakens the interaction between the histone core and the surrounding DNA in the nucleosomal particle and drives chromatin disassembly. Autoacetylates. Independently of acetyltransferase activity, stimulates histone deposition by VPS75. Involved in regulation of Ty1 transposition. The polypeptide is Histone acetyltransferase RTT109 (Saccharomyces cerevisiae (strain ATCC 204508 / S288c) (Baker's yeast)).